The chain runs to 457 residues: tRNA-2-methylthio-N(6)-dimethylallyladenosine synthase (457 aa).

The region spanning 3-120 (KKVYIKTFGC…LPQMIDQRRA (118 aa)) is the MTTase N-terminal domain. [4Fe-4S] cluster is bound by residues cysteine 12, cysteine 49, cysteine 83, cysteine 157, cysteine 161, and cysteine 164. The 235-residue stretch at 143-377 (RVEGPSAFVS…QATIEENVAR (235 aa)) folds into the Radical SAM core domain. In terms of domain architecture, TRAM spans 380 to 447 (RSMVGKVERI…PHSLRGELLL (68 aa)).

The protein belongs to the methylthiotransferase family. MiaB subfamily. Monomer. [4Fe-4S] cluster is required as a cofactor.

The protein localises to the cytoplasm. The catalysed reaction is N(6)-dimethylallyladenosine(37) in tRNA + (sulfur carrier)-SH + AH2 + 2 S-adenosyl-L-methionine = 2-methylsulfanyl-N(6)-dimethylallyladenosine(37) in tRNA + (sulfur carrier)-H + 5'-deoxyadenosine + L-methionine + A + S-adenosyl-L-homocysteine + 2 H(+). In terms of biological role, catalyzes the methylthiolation of N6-(dimethylallyl)adenosine (i(6)A), leading to the formation of 2-methylthio-N6-(dimethylallyl)adenosine (ms(2)i(6)A) at position 37 in tRNAs that read codons beginning with uridine. The polypeptide is tRNA-2-methylthio-N(6)-dimethylallyladenosine synthase (Burkholderia ambifaria (strain MC40-6)).